A 438-amino-acid chain; its full sequence is Envelope glycoprotein M (438 aa).

Topologically, residues 1-13 are intravirion; the sequence is MAGSAQPAAVHWR. A helical membrane pass occupies residues 14–34; the sequence is LWLAQVGVFAGLALLLLITLI. The Virion surface segment spans residues 35-88; the sequence is GAASPGAGLPCFYAAIVNYNARNLSADGGAWAQRELGARHPALFLETPTTAAFS. Residues 89 to 109 form a helical membrane-spanning segment; it reads AYTAVVLLAVAAFDVAAAIII. The Intravirion portion of the chain corresponds to 110–132; that stretch reads RRENSGGFAAAYHMNALATLATP. The helical transmembrane segment at 133–153 threads the bilayer; it reads PGALLLGALAAWTLQAAVLLL. Over 154–158 the chain is Virion surface; sequence SHKIM. Residues 159-179 form a helical membrane-spanning segment; the sequence is VLAAATYLAHLAPPAAFVGLF. At 180 to 212 the chain is on the intravirion side; that stretch reads CTAGLPGAEYAQAVHALRERSPRAHRLLGPGRA. Residues 213 to 233 traverse the membrane as a helical segment; the sequence is VMINLAGGLLALIIGTAPLML. Over 234-248 the chain is Virion surface; the sequence is GQLLGAGLGLSLAQT. Residues 249–269 traverse the membrane as a helical segment; it reads VVAGVTVFCLAAVLFLVLTEL. Over 270–276 the chain is Intravirion; that stretch reads VLSRYTQ. Residues 277–297 form a helical membrane-spanning segment; sequence VLPGPAFGTLVAASCIAVASH. The Virion surface portion of the chain corresponds to 298–317; the sequence is DYFHQLRGVVRTQAPRAAAR. Residues 318 to 338 traverse the membrane as a helical segment; the sequence is VKLALAGVALLAVAMLVLRLV. The Intravirion segment spans residues 339-438; sequence RACLHHRRKG…PRSPPPAHVK (100 aa). Residues 395-438 form a disordered region; it reads EEAVYEAHAPPRPPTIPLRRPEVPHSRASHPRPPPRSPPPAHVK. The segment covering 425–438 has biased composition (pro residues); sequence PRPPPRSPPPAHVK.

The protein belongs to the herpesviridae glycoprotein M family. Interacts (via N-terminus) with gN (via N-terminus). The gM-gN heterodimer forms the gCII complex. N-glycosylated. It is not O-glycosylated.

Its subcellular location is the virion membrane. It is found in the host Golgi apparatus. It localises to the host trans-Golgi network. The protein resides in the host endosome membrane. The protein localises to the host nucleus inner membrane. Functionally, envelope glycoprotein important for virion assembly and egress. Plays a role in the correct incorporation of gH-gL into virion membrane. Directs the glycoprotein N (gN) to the host trans-Golgi network. The sequence is that of Envelope glycoprotein M from Bovine herpesvirus 1.1 (strain Cooper) (BoHV-1).